The following is a 475-amino-acid chain: Glutamate--tRNA ligase (475 aa).

A 'HIGH' region motif is present at residues 8–18; it reads PSPTGTLHIGT. The 'KMSKS' region signature appears at 247 to 251; it reads KLSKR. Residue Lys-250 participates in ATP binding.

This sequence belongs to the class-I aminoacyl-tRNA synthetase family. Glutamate--tRNA ligase type 1 subfamily. Monomer.

Its subcellular location is the cytoplasm. The catalysed reaction is tRNA(Glu) + L-glutamate + ATP = L-glutamyl-tRNA(Glu) + AMP + diphosphate. Its function is as follows. Catalyzes the attachment of glutamate to tRNA(Glu) in a two-step reaction: glutamate is first activated by ATP to form Glu-AMP and then transferred to the acceptor end of tRNA(Glu). The chain is Glutamate--tRNA ligase from Synechococcus sp. (strain RCC307).